The following is a 331-amino-acid chain: Pectinesterase (331 aa).

The N-terminal stretch at 1 to 17 (MVKSILASVLFAATALA) is a signal peptide. Gln138 contributes to the substrate binding site. The active-site Proton donor is Asp161. The active-site Nucleophile is Asp182. 2 residues coordinate substrate: Arg247 and Trp249.

The protein belongs to the pectinesterase family.

Its subcellular location is the secreted. It carries out the reaction [(1-&gt;4)-alpha-D-galacturonosyl methyl ester](n) + n H2O = [(1-&gt;4)-alpha-D-galacturonosyl](n) + n methanol + n H(+). It participates in glycan metabolism; pectin degradation; 2-dehydro-3-deoxy-D-gluconate from pectin: step 1/5. Its function is as follows. Involved in maceration and soft-rotting of plant tissue. This is Pectinesterase (pme1) from Aspergillus niger.